A 140-amino-acid chain; its full sequence is Protein E6 (140 aa).

2 zinc fingers span residues Cys28–Cys64 and Cys101–Cys137.

Belongs to the papillomaviridae E6 protein family. In terms of assembly, forms homodimers. Interacts with ubiquitin-protein ligase UBE3A/E6-AP; this interaction stimulates UBE3A ubiquitin activity. Interacts with host BAK1.

It localises to the host cytoplasm. Its subcellular location is the host nucleus. In terms of biological role, plays a major role in the induction and maintenance of cellular transformation. E6 associates with host UBE3A/E6-AP ubiquitin-protein ligase and modulates its activity. Protects host keratinocytes from apoptosis by mediating the degradation of host BAK1. May also inhibit host immune response. The protein is Protein E6 of Human papillomavirus 24.